We begin with the raw amino-acid sequence, 227 residues long: UPF0758 protein Rxyl_1530 (227 aa).

Residues 106 to 227 (VISSPADVDG…YFSMKEHGML (122 aa)) form the MPN domain. Residues histidine 177, histidine 179, and aspartate 190 each contribute to the Zn(2+) site. Residues 177–190 (HNHPSGRVEPSRED) carry the JAMM motif motif.

The protein belongs to the UPF0758 family.

The sequence is that of UPF0758 protein Rxyl_1530 from Rubrobacter xylanophilus (strain DSM 9941 / JCM 11954 / NBRC 16129 / PRD-1).